The primary structure comprises 252 residues: 5-oxoprolinase subunit A (252 aa).

The protein belongs to the LamB/PxpA family. As to quaternary structure, forms a complex composed of PxpA, PxpB and PxpC.

The enzyme catalyses 5-oxo-L-proline + ATP + 2 H2O = L-glutamate + ADP + phosphate + H(+). Catalyzes the cleavage of 5-oxoproline to form L-glutamate coupled to the hydrolysis of ATP to ADP and inorganic phosphate. The polypeptide is 5-oxoprolinase subunit A (Kocuria rhizophila (strain ATCC 9341 / DSM 348 / NBRC 103217 / DC2201)).